A 428-amino-acid chain; its full sequence is Putative zinc metalloprotease LL2128 (428 aa).

Zn(2+) is bound at residue H19. E20 is a catalytic residue. H23 is a Zn(2+) binding site. Helical transmembrane passes span 188-210, 354-376, and 401-423; these read GPLN…QGGV, IVYL…IPVL, and IITM…NDIL. Positions 188 to 282 constitute a PDZ domain; it reads GPLNNFILGI…SETLSVTPKK (95 aa).

The protein belongs to the peptidase M50B family. Zn(2+) is required as a cofactor.

The protein resides in the cell membrane. This chain is Putative zinc metalloprotease LL2128, found in Lactococcus lactis subsp. lactis (strain IL1403) (Streptococcus lactis).